The following is a 175-amino-acid chain: Large ribosomal subunit protein uL10 (175 aa).

Belongs to the universal ribosomal protein uL10 family. Part of the ribosomal stalk of the 50S ribosomal subunit. The N-terminus interacts with L11 and the large rRNA to form the base of the stalk. The C-terminus forms an elongated spine to which L12 dimers bind in a sequential fashion forming a multimeric L10(L12)X complex.

Functionally, forms part of the ribosomal stalk, playing a central role in the interaction of the ribosome with GTP-bound translation factors. The protein is Large ribosomal subunit protein uL10 of Psychrobacter arcticus (strain DSM 17307 / VKM B-2377 / 273-4).